The primary structure comprises 257 residues: MKDPKAPIGVFDSGVGGLTVLKALRRLLPREEFLYFGDTARVPYGGKPLAMVRRFAWEIAGFLLRQGVKAIVVACNTASSAALPDLAEDLSVPVFGVVEPAARAARGFRKVGLIGTQATVESGAYPRYVDLAWAKACPLFVPLVEEGLWDDPVALLVARHYLEDAPKDLEALILGCTHYPFLKGAIGAVLPGVALLDSAELTAREVARALEAEGLLNPEGRGRTLHLVTGDPEAYRALAERLGERVEAVRRVSLEEL.

Residues Asp-12 to Ser-13 and Tyr-44 to Gly-45 contribute to the substrate site. The active-site Proton donor/acceptor is Cys-75. Position 76-77 (Asn-76–Thr-77) interacts with substrate. Cys-176 functions as the Proton donor/acceptor in the catalytic mechanism. Thr-177–His-178 is a substrate binding site.

This sequence belongs to the aspartate/glutamate racemases family.

The catalysed reaction is L-glutamate = D-glutamate. It participates in cell wall biogenesis; peptidoglycan biosynthesis. Provides the (R)-glutamate required for cell wall biosynthesis. In Thermus thermophilus (strain ATCC BAA-163 / DSM 7039 / HB27), this protein is Glutamate racemase.